We begin with the raw amino-acid sequence, 561 residues long: Asparagine synthetase [glutamine-hydrolyzing] (561 aa).

C2 functions as the For GATase activity in the catalytic mechanism. In terms of domain architecture, Glutamine amidotransferase type-2 spans 2–191; that stretch reads CGIWALFGSD…PGHYEVLDLK (190 aa). Residues 49–53, 75–77, and D97 each bind L-glutamine; these read RLAVV and NGE. Positions 213-536 constitute an Asparagine synthetase domain; sequence HALYDNVEKL…PGRADWLSHY (324 aa). ATP-binding positions include L256, I288, and 363–364; that span reads SG. K385 is modified (N6-acetyllysine). Position 545 is a phosphothreonine (T545). At S557 the chain carries Phosphoserine.

The enzyme catalyses L-aspartate + L-glutamine + ATP + H2O = L-asparagine + L-glutamate + AMP + diphosphate + H(+). It participates in amino-acid biosynthesis; L-asparagine biosynthesis; L-asparagine from L-aspartate (L-Gln route): step 1/1. This chain is Asparagine synthetase [glutamine-hydrolyzing] (ASNS), found in Homo sapiens (Human).